We begin with the raw amino-acid sequence, 327 residues long: ATP-dependent 6-phosphofructokinase (327 aa).

Glycine 12 provides a ligand contact to ATP. ADP-binding positions include 22–26 (RGVVR) and 55–60 (RYSVSD). Residues 73-74 (RF) and 103-106 (GDGS) contribute to the ATP site. Residue aspartate 104 coordinates Mg(2+). 127–129 (TID) provides a ligand contact to substrate. Aspartate 129 serves as the catalytic Proton acceptor. Arginine 156 contributes to the ADP binding site. Residues arginine 164 and 171–173 (MGR) contribute to the substrate site. Residues 187 to 189 (GCE), lysine 213, and 215 to 217 (KKH) each bind ADP. Residues glutamate 224, arginine 245, and 251–254 (HIQR) contribute to the substrate site.

This sequence belongs to the phosphofructokinase type A (PFKA) family. ATP-dependent PFK group I subfamily. Prokaryotic clade 'B1' sub-subfamily. In terms of assembly, homotetramer. Requires Mg(2+) as cofactor.

It is found in the cytoplasm. The catalysed reaction is beta-D-fructose 6-phosphate + ATP = beta-D-fructose 1,6-bisphosphate + ADP + H(+). It functions in the pathway carbohydrate degradation; glycolysis; D-glyceraldehyde 3-phosphate and glycerone phosphate from D-glucose: step 3/4. Allosterically activated by ADP and other diphosphonucleosides, and allosterically inhibited by phosphoenolpyruvate. Functionally, catalyzes the phosphorylation of D-fructose 6-phosphate to fructose 1,6-bisphosphate by ATP, the first committing step of glycolysis. This chain is ATP-dependent 6-phosphofructokinase, found in Yersinia pseudotuberculosis serotype O:1b (strain IP 31758).